A 618-amino-acid chain; its full sequence is Syncytin-B (618 aa).

A signal peptide spans 1-17; the sequence is MTGFWVLCFVLFPSSLS. Residues 18–545 are Extracellular-facing; it reads YPESWMPLVN…SWGQWPDLGR (528 aa). N-linked (GlcNAc...) asparagine glycosylation occurs at N27. Residues 44-47 carry the CXXC motif; sequence CWVC. 3 disulfides stabilise this stretch: C44/C47, C44/C507, and C499/C506. N-linked (GlcNAc...) asparagine glycans are attached at residues N184, N274, and N357. Positions 422–442 are fusion peptide; the sequence is LFPFLAGLGISSALGTGIAGL. The immunosuppression stretch occupies residues 482–498; sequence LQNRRALDLITAEKGGT. The CX6CC signature appears at 499–507; it reads CLFLQEECC. Residues 546 to 566 traverse the membrane as a helical segment; it reads WLPWLTPFLGPLLFLFFLLTF. Residues 567–618 are Cytoplasmic-facing; sequence GSCLLNCLTRFVSQRLGSFVQDTAKRHVDSILQNFQYKKLPQDSPDEDTIPT.

It belongs to the gamma type-C retroviral envelope protein family. As to quaternary structure, the mature protein consists of a trimer of SU-TM heterodimers. The SU-TM heterodimers are attached by a labile interchain disulfide bond. In terms of processing, synthesized as an inactive precursor that is heavily N-glycosylated and processed likely by furin in the Golgi to yield the mature SU and TM proteins. The cleavage site between SU and TM requires the minimal sequence [KR]-X-[KR]-R. The CXXC motif is highly conserved across a broad range of retroviral envelope proteins. It is thought to participate in the formation of a labile disulfide bond possibly with the CX6CC motif present in the transmembrane protein. Isomerization of the intersubunit disulfide bond to an SU intrachain disulfide bond is thought to occur upon receptor recognition in order to allow membrane fusion. As to expression, highly expressed in placenta where it localizes to syncytiotrophoblasts of the labyrinthine zona. Specifically localizes to syncytiotrophoblast layer II (SynT-II). Also detected at very low levels in ovary.

It is found in the cell membrane. Functionally, this endogenous retroviral envelope protein has retained its original fusogenic properties. Together with Syna, participates in trophoblast fusion and the formation of a syncytium during placenta morphogenesis. Synb is specifically involved in formation of syncytiotrophoblast layer II (SynT-II). Promotes myoblast fusion, and may play a role in regeneration of damaged muscle tissue in males. May have immunosuppressive activity. The polypeptide is Syncytin-B (Mus musculus (Mouse)).